A 178-amino-acid chain; its full sequence is Alkyl hydroperoxide reductase AhpD (178 aa).

Residue Cys130 is the Proton donor of the active site. A disulfide bond links Cys130 and Cys133. Residue Cys133 is the Cysteine sulfenic acid (-SOH) intermediate of the active site.

Belongs to the AhpD family. As to quaternary structure, homotrimer.

It carries out the reaction N(6)-[(R)-dihydrolipoyl]-L-lysyl-[lipoyl-carrier protein] + a hydroperoxide = N(6)-[(R)-lipoyl]-L-lysyl-[lipoyl-carrier protein] + an alcohol + H2O. In terms of biological role, antioxidant protein with alkyl hydroperoxidase activity. Required for the reduction of the AhpC active site cysteine residues and for the regeneration of the AhpC enzyme activity. The polypeptide is Alkyl hydroperoxide reductase AhpD (Mycobacterium ulcerans (strain Agy99)).